The primary structure comprises 493 residues: Glutamyl-tRNA(Gln) amidotransferase subunit A (493 aa).

Active-site charge relay system residues include K79 and S159. S183 serves as the catalytic Acyl-ester intermediate.

The protein belongs to the amidase family. GatA subfamily. Heterotrimer of A, B and C subunits.

It catalyses the reaction L-glutamyl-tRNA(Gln) + L-glutamine + ATP + H2O = L-glutaminyl-tRNA(Gln) + L-glutamate + ADP + phosphate + H(+). Its function is as follows. Allows the formation of correctly charged Gln-tRNA(Gln) through the transamidation of misacylated Glu-tRNA(Gln) in organisms which lack glutaminyl-tRNA synthetase. The reaction takes place in the presence of glutamine and ATP through an activated gamma-phospho-Glu-tRNA(Gln). This Rhizobium johnstonii (strain DSM 114642 / LMG 32736 / 3841) (Rhizobium leguminosarum bv. viciae) protein is Glutamyl-tRNA(Gln) amidotransferase subunit A.